The following is a 171-amino-acid chain: Crossover junction endodeoxyribonuclease RuvC (171 aa).

Active-site residues include Asp-7, Glu-74, and Asp-147. Mg(2+) is bound by residues Asp-7, Glu-74, and Asp-147.

This sequence belongs to the RuvC family. In terms of assembly, homodimer which binds Holliday junction (HJ) DNA. The HJ becomes 2-fold symmetrical on binding to RuvC with unstacked arms; it has a different conformation from HJ DNA in complex with RuvA. In the full resolvosome a probable DNA-RuvA(4)-RuvB(12)-RuvC(2) complex forms which resolves the HJ. The cofactor is Mg(2+).

Its subcellular location is the cytoplasm. The catalysed reaction is Endonucleolytic cleavage at a junction such as a reciprocal single-stranded crossover between two homologous DNA duplexes (Holliday junction).. Its function is as follows. The RuvA-RuvB-RuvC complex processes Holliday junction (HJ) DNA during genetic recombination and DNA repair. Endonuclease that resolves HJ intermediates. Cleaves cruciform DNA by making single-stranded nicks across the HJ at symmetrical positions within the homologous arms, yielding a 5'-phosphate and a 3'-hydroxyl group; requires a central core of homology in the junction. The consensus cleavage sequence is 5'-(A/T)TT(C/G)-3'. Cleavage occurs on the 3'-side of the TT dinucleotide at the point of strand exchange. HJ branch migration catalyzed by RuvA-RuvB allows RuvC to scan DNA until it finds its consensus sequence, where it cleaves and resolves the cruciform DNA. The protein is Crossover junction endodeoxyribonuclease RuvC of Acidobacterium capsulatum (strain ATCC 51196 / DSM 11244 / BCRC 80197 / JCM 7670 / NBRC 15755 / NCIMB 13165 / 161).